We begin with the raw amino-acid sequence, 31 residues long: MEALVYTFLLVTTLGILFFSIIFRDPPRINQ.

A helical transmembrane segment spans residues 3–23; that stretch reads ALVYTFLLVTTLGILFFSIIF.

It belongs to the PsbT family. As to quaternary structure, PSII is composed of 1 copy each of membrane proteins PsbA, PsbB, PsbC, PsbD, PsbE, PsbF, PsbH, PsbI, PsbJ, PsbK, PsbL, PsbM, PsbT, PsbX, PsbY, PsbZ, Psb30/Ycf12, at least 3 peripheral proteins of the oxygen-evolving complex and a large number of cofactors. It forms dimeric complexes.

It is found in the plastid. The protein resides in the cyanelle thylakoid membrane. In terms of biological role, found at the monomer-monomer interface of the photosystem II (PS II) dimer, plays a role in assembly and dimerization of PSII. PSII is a light-driven water plastoquinone oxidoreductase, using light energy to abstract electrons from H(2)O, generating a proton gradient subsequently used for ATP formation. This Cyanophora paradoxa protein is Photosystem II reaction center protein T.